The following is a 338-amino-acid chain: uncharacterized protein (338 aa).

Residues 1 to 72 form a disordered region; the sequence is MASPPILSRE…LNPVEDYDSK (72 aa). A compositionally biased stretch (polar residues) spans 24–38; that stretch reads GGNSEVNIDPSASSS. A compositionally biased stretch (basic and acidic residues) spans 49 to 58; it reads ADTKIDPHLL. The segment covering 59 to 68 has biased composition (acidic residues); that stretch reads EEDDLNPVED.

The protein localises to the cytoplasm. Its subcellular location is the nucleus. This is an uncharacterized protein from Schizosaccharomyces pombe (strain 972 / ATCC 24843) (Fission yeast).